The primary structure comprises 57 residues: Bowman-Birk type proteinase inhibitor B4 (57 aa).

4 cysteine pairs are disulfide-bonded: Cys-6/Cys-55, Cys-12/Cys-17, Cys-26/Cys-33, and Cys-30/Cys-47.

The protein belongs to the Bowman-Birk serine protease inhibitor family. As to expression, expressed in bulb (at protein level).

Serine protease inhibitor. Inhibits trypsin (Ki = 110 nM) and very weakly inhibits chymotrypsin (Ki =1200 nM). Does not inhibit bacterial subtilisin. The chain is Bowman-Birk type proteinase inhibitor B4 from Hyacinthus orientalis (Common hyacinth).